The primary structure comprises 298 residues: ATP phosphoribosyltransferase (298 aa).

It belongs to the ATP phosphoribosyltransferase family. Long subfamily. It depends on Mg(2+) as a cofactor.

Its subcellular location is the cytoplasm. It carries out the reaction 1-(5-phospho-beta-D-ribosyl)-ATP + diphosphate = 5-phospho-alpha-D-ribose 1-diphosphate + ATP. Its pathway is amino-acid biosynthesis; L-histidine biosynthesis; L-histidine from 5-phospho-alpha-D-ribose 1-diphosphate: step 1/9. Its activity is regulated as follows. Feedback inhibited by histidine. Catalyzes the condensation of ATP and 5-phosphoribose 1-diphosphate to form N'-(5'-phosphoribosyl)-ATP (PR-ATP). Has a crucial role in the pathway because the rate of histidine biosynthesis seems to be controlled primarily by regulation of HisG enzymatic activity. This is ATP phosphoribosyltransferase from Vibrio vulnificus (strain CMCP6).